The chain runs to 238 residues: Pyridoxine 5'-phosphate synthase (238 aa).

Asparagine 9 is a 3-amino-2-oxopropyl phosphate binding site. 11–12 is a binding site for 1-deoxy-D-xylulose 5-phosphate; sequence DH. Arginine 20 is a binding site for 3-amino-2-oxopropyl phosphate. The Proton acceptor role is filled by histidine 45. Residues arginine 47 and histidine 52 each contribute to the 1-deoxy-D-xylulose 5-phosphate site. Catalysis depends on glutamate 72, which acts as the Proton acceptor. Threonine 102 is a 1-deoxy-D-xylulose 5-phosphate binding site. Histidine 189 functions as the Proton donor in the catalytic mechanism. Residues glycine 190 and 211 to 212 contribute to the 3-amino-2-oxopropyl phosphate site; that span reads GH.

The protein belongs to the PNP synthase family. In terms of assembly, homooctamer; tetramer of dimers.

The protein localises to the cytoplasm. The catalysed reaction is 3-amino-2-oxopropyl phosphate + 1-deoxy-D-xylulose 5-phosphate = pyridoxine 5'-phosphate + phosphate + 2 H2O + H(+). It functions in the pathway cofactor biosynthesis; pyridoxine 5'-phosphate biosynthesis; pyridoxine 5'-phosphate from D-erythrose 4-phosphate: step 5/5. Functionally, catalyzes the complicated ring closure reaction between the two acyclic compounds 1-deoxy-D-xylulose-5-phosphate (DXP) and 3-amino-2-oxopropyl phosphate (1-amino-acetone-3-phosphate or AAP) to form pyridoxine 5'-phosphate (PNP) and inorganic phosphate. This is Pyridoxine 5'-phosphate synthase from Ehrlichia ruminantium (strain Gardel).